Reading from the N-terminus, the 541-residue chain is Phosphoenolpyruvate carboxykinase (ATP) (541 aa).

Substrate-binding residues include arginine 67, tyrosine 207, and lysine 213. ATP is bound by residues lysine 213, histidine 232, and 248–256 (GLSGTGKTT). Residues lysine 213 and histidine 232 each coordinate Mn(2+). Aspartate 269 provides a ligand contact to Mn(2+). Residues glutamate 297, arginine 333, 449-450 (RI), and threonine 455 contribute to the ATP site. Arginine 333 contacts substrate.

This sequence belongs to the phosphoenolpyruvate carboxykinase (ATP) family. Monomer. The cofactor is Mn(2+).

The protein resides in the cytoplasm. The enzyme catalyses oxaloacetate + ATP = phosphoenolpyruvate + ADP + CO2. It participates in carbohydrate biosynthesis; gluconeogenesis. Its function is as follows. Involved in the gluconeogenesis. Catalyzes the conversion of oxaloacetate (OAA) to phosphoenolpyruvate (PEP) through direct phosphoryl transfer between the nucleoside triphosphate and OAA. In Vibrio atlanticus (strain LGP32) (Vibrio splendidus (strain Mel32)), this protein is Phosphoenolpyruvate carboxykinase (ATP).